The chain runs to 455 residues: MNPVSPRSLTMIGAGLAGCLLAILLSRRGWQITVYERRGDPRIKGYECGRSINLALAERGRHALRQAGAEEVVMAKAVMMRGRMVHPLVGEPQLQRYGRDDSEVIWSIHRAALNVALLDLAEQAGARVHFYRRLHTVDFDAGYARFIDDRDDQPHEIHFQSLIGSDGAGSALRAAMQRKSPLGERTEFLDHSYKELEIPPLPGGGFRIEGNALHIWPRGRYMFIALPNDGGTFTVTLFLPNAGEPSFATTRNGDEAFALFARDFPDALPLIPQLKQHWEEHPPGLLGTLTLDRWHLDGRALLIGDAAHAMVPFHGQGMNCAFEDCVALADQLDAHDDLASAFAAFEAARRDDAGAIQQMALENYLEMRDRVDDPEFLLQRQLEQQLQARWPTRFVPHYTMVTFLRTRYSIALARSEIQREILVEATRGHSDLSRLDWAALETIVHARLEPLDGAH.

The protein belongs to the aromatic-ring hydroxylase family. KMO subfamily. The cofactor is FAD.

The catalysed reaction is L-kynurenine + NADPH + O2 + H(+) = 3-hydroxy-L-kynurenine + NADP(+) + H2O. The protein operates within cofactor biosynthesis; NAD(+) biosynthesis; quinolinate from L-kynurenine: step 1/3. Functionally, catalyzes the hydroxylation of L-kynurenine (L-Kyn) to form 3-hydroxy-L-kynurenine (L-3OHKyn). Required for synthesis of quinolinic acid. This chain is Kynurenine 3-monooxygenase, found in Xanthomonas oryzae pv. oryzae (strain PXO99A).